A 390-amino-acid polypeptide reads, in one-letter code: Galactokinase (390 aa).

33-36 (EHTD) serves as a coordination point for substrate. Residues Ser67 and 124 to 130 (GSGLSSS) each bind ATP. Ser130 and Glu162 together coordinate Mg(2+). Asp174 (proton acceptor) is an active-site residue. Tyr224 lines the substrate pocket.

This sequence belongs to the GHMP kinase family. GalK subfamily.

It localises to the cytoplasm. The catalysed reaction is alpha-D-galactose + ATP = alpha-D-galactose 1-phosphate + ADP + H(+). It participates in carbohydrate metabolism; galactose metabolism. Catalyzes the transfer of the gamma-phosphate of ATP to D-galactose to form alpha-D-galactose-1-phosphate (Gal-1-P). This chain is Galactokinase, found in Streptococcus suis (strain 05ZYH33).